The sequence spans 158 residues: Probable deoxyuridine 5'-triphosphate nucleotidohydrolase (158 aa).

This sequence belongs to the dUTPase family. The cofactor is Mg(2+).

The enzyme catalyses dUTP + H2O = dUMP + diphosphate + H(+). It participates in pyrimidine metabolism; dUMP biosynthesis; dUMP from dCTP (dUTP route): step 1/2. This enzyme is involved in nucleotide metabolism: it produces dUMP, the immediate precursor of thymidine nucleotides and it decreases the intracellular concentration of dUTP so that uracil cannot be incorporated into DNA. It does probably not deaminate dCTP. The chain is Probable deoxyuridine 5'-triphosphate nucleotidohydrolase from Sulfolobus islandicus rod-shaped virus 1 (SIRV-1).